The chain runs to 356 residues: DNA polymerase IV (356 aa).

The 182-residue stretch at 6-187 (IIHIDMDYFF…LDIGDFPGVG (182 aa)) folds into the UmuC domain. 2 residues coordinate Mg(2+): D10 and D105. E106 is an active-site residue.

The protein belongs to the DNA polymerase type-Y family. As to quaternary structure, monomer. Mg(2+) serves as cofactor.

Its subcellular location is the cytoplasm. The enzyme catalyses DNA(n) + a 2'-deoxyribonucleoside 5'-triphosphate = DNA(n+1) + diphosphate. Its function is as follows. Poorly processive, error-prone DNA polymerase involved in untargeted mutagenesis. Copies undamaged DNA at stalled replication forks, which arise in vivo from mismatched or misaligned primer ends. These misaligned primers can be extended by PolIV. Exhibits no 3'-5' exonuclease (proofreading) activity. May be involved in translesional synthesis, in conjunction with the beta clamp from PolIII. The polypeptide is DNA polymerase IV (Staphylococcus aureus (strain JH1)).